We begin with the raw amino-acid sequence, 368 residues long: Decarboxylase yanB (368 aa).

Residues H7, H9, and H159 each contribute to the Zn(2+) site. The N-linked (GlcNAc...) asparagine glycan is linked to N169. Zn(2+) is bound at residue D283. The helical transmembrane segment at 339 to 359 (WGAFSACLLLPVGLSALYSVL) threads the bilayer.

This sequence belongs to the metallo-dependent hydrolases superfamily. ACMSD family.

The protein resides in the membrane. The enzyme catalyses 6-methylsalicylate + H(+) = 3-methylphenol + CO2. The protein operates within secondary metabolite biosynthesis; terpenoid biosynthesis. Decarboxylase; part of the gene cluster that mediates the biosynthesis of yanuthone D, a fungal isoprenoid epoxycyclohexenone that acts as an antibiotic against fungi and bacteria. The first step of the pathway is the synthesis of 6-methylsalicylic acid (6-MSA) by the polyketide synthase yanA. 6-MSA is then converted to m-cresol by the decarboxylase yanB. The cytochrome P450 monooxygenase yanC then catalyzes the oxidation of m-cresol to toluquinol. Epoxidation of toluquinol is then performed by the short chain dehydrogenase yanD, with the help of yanE, and a further prenylation by yanG leads to 7-deacetoxyyanuthone A. The next step is the hydroxylation of C-22 of 7-deacetoxyyanuthone A by the cytochrome P450 monooxygenase yanH to yield 22-deacetylyanuthone A. O-Mevalon transferase yanI then attaches mevalon to the hydroxyl group of 22-deacetylyanuthone A to produce yanuthone E. Finally, the FAD-dependent monooxygenase yanF oxidizes the hydroxyl group at C15 of yanuthone E to form yanuthone D. Furthermore, several branching points in the pathway lead to the production of yanuthones F and G from 7-deacetoxyyanuthone A; yanuthones H and I from 22-deacetylyanuthone A; and yanuthone J from yanuthone E. In Aspergillus niger (strain ATCC 1015 / CBS 113.46 / FGSC A1144 / LSHB Ac4 / NCTC 3858a / NRRL 328 / USDA 3528.7), this protein is Decarboxylase yanB.